The following is a 746-amino-acid chain: Bud site selection protein 7 (746 aa).

The segment at 733-746 is CHS5-binding; the sequence is LNFFTTCTIGCYDA.

It belongs to the CHAPS family. As to quaternary structure, component of the CHS5/6 complex composed of the 4 CHAPS proteins BCH1, BCH2v, BUD7, and CHS6 as well as at least CHS5 and GTP-bound ARF1. The complex interacts with the cargo protein CHS3.

It localises to the golgi apparatus. The protein localises to the trans-Golgi network membrane. In terms of biological role, member of the CHS5-ARF1P-binding proteins (CHAPS) which mediates export of specific cargo proteins, including chitin synthase CHS3. May be involved in positioning the proximal bud pole signal. This Saccharomyces cerevisiae (strain ATCC 204508 / S288c) (Baker's yeast) protein is Bud site selection protein 7 (BUD7).